The primary structure comprises 215 residues: tRNA (guanine-N(7)-)-methyltransferase (215 aa).

S-adenosyl-L-methionine-binding residues include Glu-44, Glu-69, Asp-96, and Asp-118. Asp-118 is a catalytic residue. Residues Lys-122, Asp-154, and 191-194 (TEYE) contribute to the substrate site.

The protein belongs to the class I-like SAM-binding methyltransferase superfamily. TrmB family.

The enzyme catalyses guanosine(46) in tRNA + S-adenosyl-L-methionine = N(7)-methylguanosine(46) in tRNA + S-adenosyl-L-homocysteine. It functions in the pathway tRNA modification; N(7)-methylguanine-tRNA biosynthesis. Functionally, catalyzes the formation of N(7)-methylguanine at position 46 (m7G46) in tRNA. In Exiguobacterium sp. (strain ATCC BAA-1283 / AT1b), this protein is tRNA (guanine-N(7)-)-methyltransferase.